The following is a 29-amino-acid chain: Trypsin inhibitor 1 (29 aa).

Cystine bridges form between C3–C20, C10–C22, and C16–C28.

The protein belongs to the protease inhibitor I7 (squash-type serine protease inhibitor) family.

The protein resides in the secreted. Functionally, inhibits trypsin. The protein is Trypsin inhibitor 1 of Luffa aegyptiaca (Sponge gourd).